Reading from the N-terminus, the 63-residue chain is MPTFKIKPKTGLLIRDPETFELLSESGEDKPKISYWLNHLKNGDVELVTETTTKAKNSNKEQA.

It to phage Mu protein gp38.

This chain is Mu-like prophage FluMu protein gp38, found in Haemophilus influenzae (strain ATCC 51907 / DSM 11121 / KW20 / Rd).